A 261-amino-acid polypeptide reads, in one-letter code: Neurovirulence factor ICP34.5 (261 aa).

A compositionally biased stretch (basic residues) spans 1-17; it reads MSRRRGPRRRGPRRRPR. The required for nucleolar localization stretch occupies residues 1–19; sequence MSRRRGPRRRGPRRRPRPG. Disordered stretches follow at residues 1–59, 75–135, and 145–164; these read MSRR…SAPA, DSDD…LALR, and RLSL…APRG. 4 consecutive repeats follow at residues 3-7, 8-12, 16-23, and 24-31; these read RRRGP and PRPGAPAV. The segment at 3-12 is 2 X 5 AA tandem repeats of R-R-R-G-P; it reads RRRGPRRRGP. Positions 16-31 are 2 X 8 AA tandem repeats of P-R-P-G-A-P-A-V; sequence PRPGAPAVPRPGAPAV. The segment covering 18 to 32 has biased composition (pro residues); that stretch reads PGAPAVPRPGAPAVP. The span at 75–88 shows a compositional bias: acidic residues; that stretch reads DSDDADYAGNDDAE. Over residues 101 to 111 the composition is skewed to low complexity; the sequence is APEAPHAAPAA. The Nuclear export signal signature appears at 128-137; sequence LPPHLALRLR. Residues 163-176 are binding to PP1CA; sequence RGKVCFSPRVQVRH. The interaction with host PPP1CA stretch occupies residues 163 to 176; sequence RGKVCFSPRVQVRH. The segment at 178–261 is important for interferon resistance; the sequence is VAWETAARLA…AAAGPGRRAV (84 aa). The Bipartite nuclear localization signal signature appears at 188-206; it reads RRGSWARERADRDRFRRRV. Residues 206–221 are interaction with host EIF2S1/EIF-2ALPHA; the sequence is VAAAEAVIGPCLEPEA. Positions 223–261 are disordered; it reads ARARARARAHEDGGPAEEEEAAAAARGSSAAAGPGRRAV. Over residues 244-261 the composition is skewed to low complexity; sequence AAAARGSSAAAGPGRRAV.

This sequence belongs to the PPP1R15 family. As to quaternary structure, interacts with host PPP1CA to form a high-molecular-weight complex that dephosphorylates EIF2S1/eIF-2alpha. Interacts with host EIF2S1/eIF-2alpha; this interaction is crucial for the specific dephosphorylation of EIF2S1/eIF-2alpha by PPP1CA.

The protein resides in the host cytoplasm. Its subcellular location is the host nucleus. It is found in the host nucleolus. The protein localises to the virion. Its function is as follows. Plays essential roles in viral nuclear egress to mediate capsid transit across the nuclear membrane and also in the inhibition of host immune response and integrated stress response (ISR). Facilitates nuclear egress cooperatively with host C1QBP and protein kinase C/PKC to induce lamin A/C phosphorylation and subsequent reorganization. In turn, lamina disassembles and nuclear egress occurs. Recruits the serine/threonine-protein phosphatase PPP1CA/PP1-alpha to dephosphorylate the translation initiation factor EIF2S1/eIF-2alpha, thereby couteracting the host shutoff of protein synthesis involving double-stranded RNA-dependent protein kinase EIF2AK2/PKR. Also down-modulates the host MHC class II proteins cell surface expression. Acts as a neurovirulence factor that has a profound effect on the growth of the virus in central nervous system tissue, probably through its ability to maintain an environment favorable for viral replication. The protein is Neurovirulence factor ICP34.5 (RL1) of Human herpesvirus 2 (strain HG52) (HHV-2).